The sequence spans 287 residues: Ribosomal RNA small subunit methyltransferase A (287 aa).

S-adenosyl-L-methionine contacts are provided by asparagine 35, valine 37, glycine 62, glutamate 83, aspartate 113, and asparagine 131.

It belongs to the class I-like SAM-binding methyltransferase superfamily. rRNA adenine N(6)-methyltransferase family. RsmA subfamily.

It is found in the cytoplasm. The enzyme catalyses adenosine(1518)/adenosine(1519) in 16S rRNA + 4 S-adenosyl-L-methionine = N(6)-dimethyladenosine(1518)/N(6)-dimethyladenosine(1519) in 16S rRNA + 4 S-adenosyl-L-homocysteine + 4 H(+). Specifically dimethylates two adjacent adenosines (A1518 and A1519) in the loop of a conserved hairpin near the 3'-end of 16S rRNA in the 30S particle. May play a critical role in biogenesis of 30S subunits. The sequence is that of Ribosomal RNA small subunit methyltransferase A from Thermobifida fusca (strain YX).